The primary structure comprises 409 residues: MVPVSLGCAMQSPWQLVSGGVTSPQGFQASGIAAGLKPSGKLDMALLLAPEQAVCAGSFTTSVVRAACVDLCAERLAANGGQARAVLINSGQANACTGDRGLIDSQRATQALADQLGLDAEALLICSTGVIGVPIPMPKLLAGLDPLVAALSATGGEAAATAILTTDLVSKQVALEAELGGRRVRIGGIAKGSGMIHPDMATMLGFFSCDAGLDPSIWKAMVGQAVQRSFNAITVDGDTSTNDTVLAFAAGDPLDSVHHAALEQGLTEAMQHLAKAIARDGEGATCLIEVQVEGALDEPSAQRVARTIVGSSLVKTAVHGRDPNWGRIVAAAGRSGVPFDPEQVALWIGPHQLMQSGQPLSFDPEAASRVLRSETVQIRIQLGDGPGNGLAWGCDLSDQYVRINADYTT.

T165, K191, T202, E282, N404, and T409 together coordinate substrate. T202 serves as the catalytic Nucleophile.

Belongs to the ArgJ family. In terms of assembly, heterotetramer of two alpha and two beta chains.

It is found in the cytoplasm. It carries out the reaction N(2)-acetyl-L-ornithine + L-glutamate = N-acetyl-L-glutamate + L-ornithine. It catalyses the reaction L-glutamate + acetyl-CoA = N-acetyl-L-glutamate + CoA + H(+). It functions in the pathway amino-acid biosynthesis; L-arginine biosynthesis; L-ornithine and N-acetyl-L-glutamate from L-glutamate and N(2)-acetyl-L-ornithine (cyclic): step 1/1. It participates in amino-acid biosynthesis; L-arginine biosynthesis; N(2)-acetyl-L-ornithine from L-glutamate: step 1/4. In terms of biological role, catalyzes two activities which are involved in the cyclic version of arginine biosynthesis: the synthesis of N-acetylglutamate from glutamate and acetyl-CoA as the acetyl donor, and of ornithine by transacetylation between N(2)-acetylornithine and glutamate. The protein is Arginine biosynthesis bifunctional protein ArgJ of Parasynechococcus marenigrum (strain WH8102).